We begin with the raw amino-acid sequence, 778 residues long: MDTISDVMKHCVPINYDDYDPLPADHFSTYPVFCSKATAEAIEASAEFTRKWKRACEVDGLHQDKLSFQACTTHLGHYNQWAYPDCVPERVSLNAVLSDCAFFWDGMSPVTGRSANVMITSPVDVSDSISAEKMNELTQDFGIAMLSELQSGRRIEPKFEINKMAVQVIRDFIAVDPFTGIGHLKEWKGHLDAQKKSTHNNMSWEKYVEHRVNESGGNWGISVGCWTNDIRISDEEKESVKYLTQLACAGGILGNDYYSFPKEFDEHHRSGTLDRIQNGVALLMREYGYTEEEAKEIIKKEVIIREKKWMDGFNAWSRQAGPETGEIRRYLVMTMALMSGSMFWMSHAGRYHRTDLATTAEDRATLIGKSRGALRVLEGYPPPKNLEGIVREPLASAVQDDNGHVQHEDAVADSSVRNGVHDAFKKSNPRNGKQNGTEGSKGTFTNGGYVQPAKLQQHCTSINSMAIYTAPFQEAAGDICDAPYGYIDSLPSKKNRNKLLDLLNDWLQVPPSSLKRIKNIVHMLHNSSLMLDDIEDASALRRGQPATHTFYGISQTINSANYIYVHVVDEVTRLYNPECINIFVDELRNLHRGQSLDLYWRHHARCPSMEEYIVMVDNKTGGLFRLMLRLLTAESSISRPFDTALSRLLTLTGRYYQIRDDYLNLASADYESKKGFCEDFDEGKFSLPLIHLLSHTRYPDRITSALFNRKPGTNLPYEMKRYILAEMEEVQTLAYSQDVLKYLHEELMHALDEAENRLGANDGVRMMLLGMGPKLLLC.

Residues 4–359 (ISDVMKHCVP…RYHRTDLATT (356 aa)) form a sesterterpenoid synthase region. Residue Asp-105 coordinates Mg(2+). Substrate is bound at residue Asp-105. Residues 211-214 (RVNE) are substrate. Position 255 (Asn-255) interacts with substrate. 2 substrate regions span residues 259 to 263 (SFPKE) and 350 to 351 (RY). The segment at 360-774 (AEDRATLIGK…RMMLLGMGPK (415 aa)) is geranylfarneyl diphosphate synthase. The tract at residues 423 to 445 (AFKKSNPRNGKQNGTEGSKGTFT) is disordered. Residues 429–445 (PRNGKQNGTEGSKGTFT) are compositionally biased toward polar residues. Lys-493, Arg-496, and His-525 together coordinate isopentenyl diphosphate. Residues Asp-532 and Asp-536 each contribute to the Mg(2+) site. Residue Arg-541 participates in dimethylallyl diphosphate binding. Residue Arg-542 coordinates isopentenyl diphosphate. Dimethylallyl diphosphate contacts are provided by Lys-619, Thr-620, Gln-657, Asn-664, and Lys-674.

It in the N-terminal section; belongs to the terpene synthase family. The protein in the C-terminal section; belongs to the FPP/GGPP synthase family.

The catalysed reaction is 4 isopentenyl diphosphate + dimethylallyl diphosphate = (2E,6E,10E,14E)-geranylfarnesyl diphosphate + 4 diphosphate. It catalyses the reaction (2E,6E,10E,14E)-geranylfarnesyl diphosphate + H2O = preaspterpenacid acid I + diphosphate. It functions in the pathway secondary metabolite biosynthesis; terpenoid biosynthesis. Its function is as follows. Sesterterpenoid synthase; part of the gene cluster that mediates the biosynthesis of aspterpenacids. Performs both prenyl transferase and terpene cyclase activity, converting isopentenyl diphosphate and dimethylallyl diphosphate into geranylfarnesyl diphosphate (GFPP) and then converting GFPP into preaspterpenacid I. C22-oxidative modification of preaspterpenacid I by the cytochrome P450 monooxygenase sttB then leads to preaspterpenacid II. It has still to be determined how preaspterpenacid II is further modified to produce aspterpenacids. This Aspergillus terreus protein is Preaspterpenacid I synthase sttA.